The chain runs to 44 residues: Diuretic hormone (44 aa).

Val44 carries the valine amide modification.

It localises to the secreted. Regulation of fluid secretion. Stimulates primary urine secretion by Malpighian tubules and causes a dose-dependent stimulation of cAMP levels in the tubules. May act as clearance peptide in that it may remove metabolic waste from the hemolymph. The polypeptide is Diuretic hormone (Stomoxys calcitrans (Stable fly)).